Here is a 349-residue protein sequence, read N- to C-terminus: Alcohol dehydrogenase 1 (349 aa).

Positions 46, 69, 100, 103, 106, 114, and 156 each coordinate Zn(2+). NAD(+) contacts are provided by residues Gly180–Gly186, Asp204, Lys208, Val270–Leu272, and Arg342.

Belongs to the zinc-containing alcohol dehydrogenase family. In terms of assembly, homotetramer. Zn(2+) is required as a cofactor.

The catalysed reaction is a primary alcohol + NAD(+) = an aldehyde + NADH + H(+). The enzyme catalyses a secondary alcohol + NAD(+) = a ketone + NADH + H(+). This Caenorhabditis elegans protein is Alcohol dehydrogenase 1.